A 233-amino-acid chain; its full sequence is Ion-translocating oxidoreductase complex subunit E (233 aa).

6 helical membrane-spanning segments follow: residues 18–38 (ALVQ…ATNA), 39–59 (LGLG…VSAL), 69–89 (IPIY…LINA), 92–112 (FGLY…CIVI), 128–148 (ALDG…LGAL), and 182–202 (PFLL…LLAG).

Belongs to the NqrDE/RnfAE family. In terms of assembly, the complex is composed of six subunits: RnfA, RnfB, RnfC, RnfD, RnfE and RnfG.

It localises to the cell inner membrane. Functionally, part of a membrane-bound complex that couples electron transfer with translocation of ions across the membrane. This Yersinia pseudotuberculosis serotype IB (strain PB1/+) protein is Ion-translocating oxidoreductase complex subunit E.